A 22-amino-acid chain; its full sequence is Melittin-like peptide (22 aa).

Q22 bears the Glutamine amide mark.

As to expression, expressed by the skin dorsal glands.

The protein localises to the secreted. In Rana temporaria (European common frog), this protein is Melittin-like peptide.